A 98-amino-acid polypeptide reads, in one-letter code: MRTYEIMYIVRPNIEEDAKKALVERFNGILASEGSEVLEEKDWGKRRLAYEINDFKEGFYNIVRIKTDNNKSTDEFQRLAKINDDIIRYIVIREDQDK.

It belongs to the bacterial ribosomal protein bS6 family.

In terms of biological role, binds together with bS18 to 16S ribosomal RNA. The sequence is that of Small ribosomal subunit protein bS6 from Staphylococcus epidermidis (strain ATCC 35984 / DSM 28319 / BCRC 17069 / CCUG 31568 / BM 3577 / RP62A).